The chain runs to 443 residues: Phosphoglucosamine mutase (443 aa).

The active-site Phosphoserine intermediate is the Ser-100. The Mg(2+) site is built by Ser-100, Asp-239, Asp-241, and Asp-243. Phosphoserine is present on Ser-100.

Belongs to the phosphohexose mutase family. Mg(2+) serves as cofactor. In terms of processing, activated by phosphorylation.

The enzyme catalyses alpha-D-glucosamine 1-phosphate = D-glucosamine 6-phosphate. Functionally, catalyzes the conversion of glucosamine-6-phosphate to glucosamine-1-phosphate. The chain is Phosphoglucosamine mutase from Shewanella loihica (strain ATCC BAA-1088 / PV-4).